The primary structure comprises 342 residues: 4-hydroxy-3-methylbut-2-enyl diphosphate reductase (342 aa).

Cys47 serves as a coordination point for [4Fe-4S] cluster. His78 and His111 together coordinate (2E)-4-hydroxy-3-methylbut-2-enyl diphosphate. 2 residues coordinate dimethylallyl diphosphate: His78 and His111. Isopentenyl diphosphate-binding residues include His78 and His111. Cys133 provides a ligand contact to [4Fe-4S] cluster. Residue His161 coordinates (2E)-4-hydroxy-3-methylbut-2-enyl diphosphate. A dimethylallyl diphosphate-binding site is contributed by His161. An isopentenyl diphosphate-binding site is contributed by His161. Glu163 serves as the catalytic Proton donor. A (2E)-4-hydroxy-3-methylbut-2-enyl diphosphate-binding site is contributed by Thr201. Cys231 provides a ligand contact to [4Fe-4S] cluster. Positions 259, 260, 261, and 303 each coordinate (2E)-4-hydroxy-3-methylbut-2-enyl diphosphate. Dimethylallyl diphosphate contacts are provided by Ser259, Ser260, Asn261, and Ser303. Residues Ser259, Ser260, Asn261, and Ser303 each contribute to the isopentenyl diphosphate site.

It belongs to the IspH family. [4Fe-4S] cluster serves as cofactor.

It catalyses the reaction isopentenyl diphosphate + 2 oxidized [2Fe-2S]-[ferredoxin] + H2O = (2E)-4-hydroxy-3-methylbut-2-enyl diphosphate + 2 reduced [2Fe-2S]-[ferredoxin] + 2 H(+). The enzyme catalyses dimethylallyl diphosphate + 2 oxidized [2Fe-2S]-[ferredoxin] + H2O = (2E)-4-hydroxy-3-methylbut-2-enyl diphosphate + 2 reduced [2Fe-2S]-[ferredoxin] + 2 H(+). Its pathway is isoprenoid biosynthesis; dimethylallyl diphosphate biosynthesis; dimethylallyl diphosphate from (2E)-4-hydroxy-3-methylbutenyl diphosphate: step 1/1. It functions in the pathway isoprenoid biosynthesis; isopentenyl diphosphate biosynthesis via DXP pathway; isopentenyl diphosphate from 1-deoxy-D-xylulose 5-phosphate: step 6/6. Catalyzes the conversion of 1-hydroxy-2-methyl-2-(E)-butenyl 4-diphosphate (HMBPP) into a mixture of isopentenyl diphosphate (IPP) and dimethylallyl diphosphate (DMAPP). Acts in the terminal step of the DOXP/MEP pathway for isoprenoid precursor biosynthesis. This is 4-hydroxy-3-methylbut-2-enyl diphosphate reductase from Anaplasma marginale (strain Florida).